The primary structure comprises 151 residues: 1,4-dihydroxy-2-naphthoyl-CoA hydrolase (151 aa).

Aspartate 19 is an active-site residue.

This sequence belongs to the 4-hydroxybenzoyl-CoA thioesterase family. DHNA-CoA hydrolase subfamily.

It carries out the reaction 1,4-dihydroxy-2-naphthoyl-CoA + H2O = 1,4-dihydroxy-2-naphthoate + CoA + H(+). It functions in the pathway cofactor biosynthesis; phylloquinone biosynthesis. The protein operates within quinol/quinone metabolism; 1,4-dihydroxy-2-naphthoate biosynthesis; 1,4-dihydroxy-2-naphthoate from chorismate: step 7/7. Catalyzes the hydrolysis of 1,4-dihydroxy-2-naphthoyl-CoA (DHNA-CoA) to 1,4-dihydroxy-2-naphthoate (DHNA), a reaction involved in phylloquinone (vitamin K1) biosynthesis. This Prochlorococcus marinus (strain MIT 9313) protein is 1,4-dihydroxy-2-naphthoyl-CoA hydrolase.